The sequence spans 302 residues: UDP-N-acetylenolpyruvoylglucosamine reductase (302 aa).

The FAD-binding PCMH-type domain occupies 27–192; it reads KTGGPADYVA…VSVTFGLKPG (166 aa). The active site involves Arg-171. Ser-221 functions as the Proton donor in the catalytic mechanism. Residue Glu-291 is part of the active site.

This sequence belongs to the MurB family. FAD is required as a cofactor.

It is found in the cytoplasm. It carries out the reaction UDP-N-acetyl-alpha-D-muramate + NADP(+) = UDP-N-acetyl-3-O-(1-carboxyvinyl)-alpha-D-glucosamine + NADPH + H(+). It participates in cell wall biogenesis; peptidoglycan biosynthesis. Its function is as follows. Cell wall formation. The chain is UDP-N-acetylenolpyruvoylglucosamine reductase from Lactiplantibacillus plantarum (strain ATCC BAA-793 / NCIMB 8826 / WCFS1) (Lactobacillus plantarum).